The following is a 475-amino-acid chain: UDP-glycosyltransferase 101 (475 aa).

The Proton acceptor role is filled by His15. An an anthocyanidin-binding site is contributed by His15. The active-site Charge relay is Asp117. UDP-alpha-D-glucose contacts are provided by Ala345, Gln347, His362, Trp365, Asn366, Ser367, and Glu370. Gly385 is a binding site for an anthocyanidin. UDP-alpha-D-glucose contacts are provided by Glu386 and Gln387.

Belongs to the UDP-glycosyltransferase family.

It carries out the reaction (20S)-protopanaxadiol + UDP-alpha-D-glucose = (20S)-ginsenoside C-K + UDP + H(+). The catalysed reaction is (20S)-ginsenoside Rg3 + UDP-alpha-D-glucose = (20S)-ginsenoside Rd + UDP + H(+). It catalyses the reaction (20S)-protopanaxatriol + UDP-alpha-D-glucose = (20S)-ginsenoside F1 + UDP + H(+). The enzyme catalyses (20S)-ginsenoside F1 + UDP-alpha-D-glucose = (20S)-ginsenoside Rg1 + UDP + H(+). Its pathway is secondary metabolite biosynthesis; terpenoid biosynthesis. Its function is as follows. Component of the dammarane-type triterpene saponins (e.g. ginsenosides or panaxosides) biosynthetic pathway. Glycosyltransferase that catalyzes the biosynthesis of ginsenoside F1 from protopanaxatriol (PPT) and the conversion of ginsenoside F1 to ginsenoside Rg1. Triggers C20-OH glycosylation of ginsenoside Rg3 to produce ginsenoside Rd. Mediates the conversion of protopanaxadiol (PPD) to the ginsenoside compound K. The polypeptide is UDP-glycosyltransferase 101 (Panax ginseng (Korean ginseng)).